Consider the following 232-residue polypeptide: MPRPPPPPPPGRGAPGARRPMREFFAAWLSTLRSPLLPLLRRALSSSSSSSSGGWDDPLSSAAAAVEAHFQAHWSALDAAARQDPAQAVSAGDWRSPLELPFLWVGDLHPSLVTSLLRSLSPSPRLLAATDRVDRRIRAAVPSISDRLRRVQEAFISAEVSGAADVEAFLEELKDVALDANRLRRGVLSELVAAAGGYQAALFLEALSRFVLSMHDPEVLRRFDQCRASPGS.

In terms of assembly, interacts with LECRKS7/DAF1.

The protein resides in the cytoplasm. In terms of biological role, required for pollen aperture formation, male fertility and LECRKS7/DAF1 function. Seems to be involved in operculum protrusion. Participates in the modification of plasma membrane at future aperture sites, possibly by creating close contact between the plasma membrane and callose wall to prevent primexine formation and sporopollenin deposition. The polypeptide is Protein INAPERTURATE POLLEN 1 homolog (Oryza sativa subsp. japonica (Rice)).